A 597-amino-acid polypeptide reads, in one-letter code: Inactive metallocarboxypeptidase ECM14 (597 aa).

An N-terminal signal peptide occupies residues 1-21 (MRLFTHGQVLALLAFVNTISA). The propeptide occupies 22–174 (TPSFSTNSYP…QTIYESYPSP (153 aa)). Over residues 170–179 (SYPSPSQSPS) the composition is skewed to low complexity. Residues 170 to 189 (SYPSPSQSPSGRERGFLPSG) form a disordered region. Residues 202-522 (NYQPLSVIVP…NAVMMLGRFL (321 aa)) form the Peptidase M14 domain. Zn(2+) is bound by residues His-264 and Glu-267. Residues 264–267 (HARE), Arg-322, and 339–340 (DR) each bind substrate. Cys-333 and Cys-356 form a disulfide bridge. N-linked (GlcNAc...) asparagine glycosylation occurs at Asn-349. His-396 lines the Zn(2+) pocket. 397-398 (SY) contributes to the substrate binding site. A disordered region spans residues 543 to 597 (KDDKPILNDDDDDDADTNDDGIGRKDDSWIPDEYKGDNDRDESDGGWAFRRLRKR). A compositionally biased stretch (acidic residues) spans 550-561 (NDDDDDDADTND). Positions 563–580 (GIGRKDDSWIPDEYKGDN) are enriched in basic and acidic residues.

It belongs to the peptidase M14 family. The cofactor is Zn(2+).

The protein localises to the vacuole. The protein resides in the secreted. Functionally, inactive carboxypeptidase that may play a role in cell wall organization and biogenesis. The polypeptide is Inactive metallocarboxypeptidase ECM14 (ECM14) (Ajellomyces capsulatus (strain G186AR / H82 / ATCC MYA-2454 / RMSCC 2432) (Darling's disease fungus)).